We begin with the raw amino-acid sequence, 341 residues long: Phenylalanine--tRNA ligase alpha subunit (341 aa).

Mg(2+) is bound at residue Glu259.

The protein belongs to the class-II aminoacyl-tRNA synthetase family. Phe-tRNA synthetase alpha subunit type 1 subfamily. Tetramer of two alpha and two beta subunits. Requires Mg(2+) as cofactor.

It localises to the cytoplasm. The enzyme catalyses tRNA(Phe) + L-phenylalanine + ATP = L-phenylalanyl-tRNA(Phe) + AMP + diphosphate + H(+). This is Phenylalanine--tRNA ligase alpha subunit from Mycobacterium tuberculosis (strain ATCC 25177 / H37Ra).